We begin with the raw amino-acid sequence, 439 residues long: tRNA modification GTPase MnmE (439 aa).

3 residues coordinate (6S)-5-formyl-5,6,7,8-tetrahydrofolate: Arg23, Glu80, and Lys120. In terms of domain architecture, TrmE-type G spans 217–365 (GLKIVIAGEP…LLTALQSHLP (149 aa)). Asn227 is a binding site for K(+). GTP is bound by residues 227 to 232 (NAGKSS), 246 to 252 (TEVAGTT), and 271 to 274 (DTAG). Ser231 contacts Mg(2+). Thr246, Val248, and Thr251 together coordinate K(+). Residue Thr252 coordinates Mg(2+). Lys439 lines the (6S)-5-formyl-5,6,7,8-tetrahydrofolate pocket.

This sequence belongs to the TRAFAC class TrmE-Era-EngA-EngB-Septin-like GTPase superfamily. TrmE GTPase family. Homodimer. Heterotetramer of two MnmE and two MnmG subunits. K(+) serves as cofactor.

It is found in the cytoplasm. Its function is as follows. Exhibits a very high intrinsic GTPase hydrolysis rate. Involved in the addition of a carboxymethylaminomethyl (cmnm) group at the wobble position (U34) of certain tRNAs, forming tRNA-cmnm(5)s(2)U34. The chain is tRNA modification GTPase MnmE from Rhizobium meliloti (strain 1021) (Ensifer meliloti).